Consider the following 1261-residue polypeptide: AT-rich interactive domain-containing protein 4A (1261 aa).

The DNA-binding stretch occupies residues alanine 4 to aspartate 121. 3 disordered regions span residues arginine 142–arginine 169, glutamate 273–glutamate 310, and alanine 435–arginine 470. Acidic residues-rich tracts occupy residues threonine 151 to glutamate 165 and serine 276 to glutamate 289. Residues glutamate 290–glutamate 299 are compositionally biased toward basic and acidic residues. The segment covering glutamate 300–glutamate 310 has biased composition (acidic residues). Positions proline 309 to arginine 401 constitute an ARID domain. Lysine 481 participates in a covalent cross-link: Glycyl lysine isopeptide (Lys-Gly) (interchain with G-Cter in SUMO2). Disordered stretches follow at residues leucine 498 to valine 582, tryptophan 633 to aspartate 768, and phenylalanine 842 to methionine 953. Over residues proline 512–phenylalanine 522 the composition is skewed to basic and acidic residues. The segment covering serine 526 to lysine 536 has biased composition (basic residues). Over residues serine 541–lysine 551 the composition is skewed to acidic residues. Residues serine 552–serine 564 show a composition bias toward basic and acidic residues. Acidic residues predominate over residues glutamate 565 to glutamate 574. One can recognise a Tudor-knot domain in the interval glycine 579 to isoleucine 631. Basic residues predominate over residues proline 640–lysine 649. A compositionally biased stretch (basic and acidic residues) spans asparagine 650–glutamine 665. A compositionally biased stretch (polar residues) spans serine 676–threonine 689. Residue serine 679 is modified to Phosphoserine. Low complexity predominate over residues serine 690 to aspartate 702. The segment covering glutamine 708–arginine 753 has biased composition (basic and acidic residues). Serine 719 is subject to Phosphoserine. Residues lysine 723 and lysine 743 each participate in a glycyl lysine isopeptide (Lys-Gly) (interchain with G-Cter in SUMO2) cross-link. Residue serine 867 is modified to Phosphoserine. Basic and acidic residues-rich tracts occupy residues lysine 899 to threonine 909 and threonine 929 to lysine 947. The tract at residues leucine 955–leucine 968 is retinoblastoma protein binding. Residues histidine 1067–serine 1080 show a composition bias toward basic and acidic residues. 2 disordered regions span residues histidine 1067–lysine 1173 and arginine 1216–arginine 1261. 2 positions are modified to phosphoserine: serine 1113 and serine 1149. A compositionally biased stretch (low complexity) spans histidine 1230–proline 1252.

As to quaternary structure, identified in mSin3A corepressor complexes together with SIN3A, SIN3B, RBBP4, RBBP7, SAP30, BRMS1, HDAC1 and HDAC2. Interacts with BRMS1. Interacts with RB1. Interacts with ARID4B. Interacts with AR. As to expression, expressed in Sertoli cells of the testis.

Its subcellular location is the nucleus. Functionally, DNA-binding protein which modulates activity of several transcription factors including RB1 (retinoblastoma-associated protein) and AR (androgen receptor). May function as part of an mSin3A repressor complex. Has no intrinsic transcriptional activity. Plays a role in the regulation of epigenetic modifications at the PWS/AS imprinting center near the SNRPN promoter, where it might function as part of a complex with RB1 and ARID4B. Involved in spermatogenesis, together with ARID4B, where it acts as a transcriptional coactivator for AR and enhances expression of genes required for sperm maturation. Regulates expression of the tight junction protein CLDN3 in the testis, which is important for integrity of the blood-testis barrier. Plays a role in myeloid homeostasis where it regulates the histone methylation state of bone marrow cells and expression of various genes involved in hematopoiesis. May function as a leukemia suppressor. The chain is AT-rich interactive domain-containing protein 4A from Mus musculus (Mouse).